An 80-amino-acid polypeptide reads, in one-letter code: UPF0154 protein SaurJH1_1431 (80 aa).

A helical membrane pass occupies residues 4-24 (WLAIIFIVAALILGLIGGFLL).

The protein belongs to the UPF0154 family.

Its subcellular location is the cell membrane. This is UPF0154 protein SaurJH1_1431 from Staphylococcus aureus (strain JH1).